A 551-amino-acid polypeptide reads, in one-letter code: Cilia- and flagella-associated protein 45 (551 aa).

3 disordered regions span residues 1 to 52, 232 to 256, and 385 to 415; these read MPLR…KSDS, MEID…ERVR, and EQDA…KKIE. Residues 8–18 are compositionally biased toward low complexity; it reads ASSSASTASNR. Residues 276 to 524 adopt a coiled-coil conformation; it reads AEHREQEKEQ…EDIKKQKLEE (249 aa). Basic and acidic residues predominate over residues 387–415; that stretch reads DALRAKRNQEVADREWRRKEKENAQKKIE.

Belongs to the CFAP45 family. As to quaternary structure, microtubule inner protein component of sperm flagellar doublet microtubules. Interacts with AK8; dimerization with AK8 may create a cavity at the interface of the dimer that can accommodate AMP. Interacts with CFAP52. Interacts with ENKUR. Directly interacts with DNALI1. Interacts with DNAH11. Interacts with DNAI1. In terms of tissue distribution, expressed in respiratory cells and in sperm (at protein level).

It localises to the cytoplasm. The protein resides in the cytoskeleton. Its subcellular location is the cilium axoneme. The protein localises to the flagellum axoneme. It is found in the cell projection. It localises to the cilium. The protein resides in the flagellum. Microtubule inner protein (MIP) part of the dynein-decorated doublet microtubules (DMTs) in cilia axoneme, which is required for motile cilia beating. It is an AMP-binding protein that may facilitate dynein ATPase-dependent ciliary and flagellar beating via adenine nucleotide homeostasis. May function as a donor of AMP to AK8 and hence promote ADP production. This Mus musculus (Mouse) protein is Cilia- and flagella-associated protein 45 (Cfap45).